The sequence spans 189 residues: UPF0301 protein PFLU_5755 (189 aa).

It belongs to the UPF0301 (AlgH) family.

The polypeptide is UPF0301 protein PFLU_5755 (Pseudomonas fluorescens (strain SBW25)).